The sequence spans 1342 residues: Cytokinesis protein sepH (1342 aa).

Over residues 1–10 (MVSRSSEGAE) the composition is skewed to low complexity. The disordered stretch occupies residues 1–47 (MVSRSSEGAEGPPPSAPKPPNTPAKSRLSRLGSSPSKREDKSRDDRM). Positions 11–22 (GPPPSAPKPPNT) are enriched in pro residues. Residues 36-47 (SKREDKSRDDRM) show a composition bias toward basic and acidic residues. Positions 61 to 308 (YQLGDCLGKG…ARKLLKHPWI (248 aa)) constitute a Protein kinase domain. ATP contacts are provided by residues 67-75 (LGKGAFGSV) and lysine 90. Aspartate 180 serves as the catalytic Proton acceptor. Disordered regions lie at residues 336 to 396 (NEAL…EEDN), 441 to 486 (IKSD…QLQE), and 552 to 591 (ADENVDPFESSPSKEAIRNRASAEDVMGQQPQLRKQISVK). Residues 369–379 (KDTLPSPVSRN) are compositionally biased toward polar residues. The stretch at 658–695 (FAQLEEGLDEMDLEANIARDKHARLRNQVEGLVSSLKT) forms a coiled coil. The segment at 1201–1342 (SEAYGMGKRK…QTQADADWTP (142 aa)) is disordered. Over residues 1207 to 1217 (GKRKPMVRRRS) the composition is skewed to basic residues. 2 stretches are compositionally biased toward polar residues: residues 1218–1244 (TSATPPNLLANQSAPSTPQMNRTSQSK) and 1273–1290 (DGSTPSLTAGLNGSTGAS). A compositionally biased stretch (low complexity) spans 1315–1324 (RPSSSLSRRQ).

It belongs to the protein kinase superfamily. Ser/Thr protein kinase family. CDC7 subfamily. It depends on Mg(2+) as a cofactor.

It carries out the reaction L-seryl-[protein] + ATP = O-phospho-L-seryl-[protein] + ADP + H(+). The catalysed reaction is L-threonyl-[protein] + ATP = O-phospho-L-threonyl-[protein] + ADP + H(+). In terms of biological role, required for early events during cytokinesis including localization of cytoskeletal components to the cytokinetic ring. The polypeptide is Cytokinesis protein sepH (Aspergillus terreus (strain NIH 2624 / FGSC A1156)).